The following is a 206-amino-acid chain: Uridine kinase (206 aa).

Residue 9 to 16 (GGSGSGKT) coordinates ATP.

It belongs to the uridine kinase family. As to quaternary structure, monomer.

The protein resides in the cytoplasm. The enzyme catalyses uridine + ATP = UMP + ADP + H(+). It carries out the reaction cytidine + ATP = CMP + ADP + H(+). It participates in pyrimidine metabolism; CTP biosynthesis via salvage pathway; CTP from cytidine: step 1/3. The protein operates within pyrimidine metabolism; UMP biosynthesis via salvage pathway; UMP from uridine: step 1/1. This Borreliella burgdorferi (strain ATCC 35210 / DSM 4680 / CIP 102532 / B31) (Borrelia burgdorferi) protein is Uridine kinase (udk).